A 136-amino-acid chain; its full sequence is Peptide deformylase (136 aa).

Positions 85 and 126 each coordinate Fe cation. Glu-127 is a catalytic residue. Residue His-130 participates in Fe cation binding.

This sequence belongs to the polypeptide deformylase family. Requires Fe(2+) as cofactor.

It catalyses the reaction N-terminal N-formyl-L-methionyl-[peptide] + H2O = N-terminal L-methionyl-[peptide] + formate. Functionally, removes the formyl group from the N-terminal Met of newly synthesized proteins. Requires at least a dipeptide for an efficient rate of reaction. N-terminal L-methionine is a prerequisite for activity but the enzyme has broad specificity at other positions. The protein is Peptide deformylase of Clostridium beijerinckii (strain ATCC 51743 / NCIMB 8052) (Clostridium acetobutylicum).